Reading from the N-terminus, the 91-residue chain is Late embryogenesis abundant protein EMB564 (91 aa).

Composition is skewed to basic and acidic residues over residues 1 to 19 and 32 to 51; these read MASGQESRKELDRKAREGE and EAQEHLAEGRSRGGQTRREQ. A disordered region spans residues 1–91; it reads MASGQESRKE…VTIDESKFTK (91 aa).

Belongs to the small hydrophilic plant seed protein family.

Functionally, LEA proteins are late embryonic proteins abundant in higher plant seed embryos. They may play an essential role in seed survival and in controlling water exchanges during seed desiccation and imbibition. The polypeptide is Late embryogenesis abundant protein EMB564 (Zea mays (Maize)).